A 441-amino-acid chain; its full sequence is CBL-interacting serine/threonine-protein kinase 3 (441 aa).

The 256-residue stretch at 14–269 (YEVGRTIGEG…PQEVFEDEWF (256 aa)) folds into the Protein kinase domain. Residues 20 to 28 (IGEGTFAKV) and lysine 43 each bind ATP. The active-site Proton acceptor is aspartate 137. The activation loop stretch occupies residues 155–184 (DFGLSALSQQVRDDGLLHTSCGTPNYVAPE). The 25-residue stretch at 307 to 331 (EQPAAINAFEIISMSRGLNLENLFD) folds into the NAF domain. The PPI stretch occupies residues 337–366 (KRETRITLRGGANEIIEKIEEAAKPLGFDV).

Belongs to the protein kinase superfamily. CAMK Ser/Thr protein kinase family. SNF1 subfamily. In terms of assembly, interacts with CBL3 and CBL9. It depends on Mn(2+) as a cofactor. Mostly expressed in germinating seeds and young seedlings. Detected at low levels in roots, stems, leaves and flowers.

It carries out the reaction L-seryl-[protein] + ATP = O-phospho-L-seryl-[protein] + ADP + H(+). The catalysed reaction is L-threonyl-[protein] + ATP = O-phospho-L-threonyl-[protein] + ADP + H(+). Its function is as follows. Involved in the resistance to some abiotic stresses (e.g. high salt, hyperosmotic stress) in young seedlings, by regulating the expression of several stress-inducible genes (cold- and salt-induced genes but not drought-responsive genes). Required for the ABA response during germination. CIPK serine-threonine protein kinases interact with CBL proteins. Binding of a CBL protein to the regulatory NAF domain of CIPK protein lead to the activation of the kinase in a calcium-dependent manner. The CBL9/CIPK3 complex acts in the regulation of abscisic acid response in seed germination. This Arabidopsis thaliana (Mouse-ear cress) protein is CBL-interacting serine/threonine-protein kinase 3 (CIPK3).